Reading from the N-terminus, the 481-residue chain is Cobyric acid synthase (481 aa).

The GATase cobBQ-type domain occupies 248 to 435 (NTVIAVPMLP…LHGLFHGGAF (188 aa)). The Nucleophile role is filled by C329. H427 is an active-site residue.

It belongs to the CobB/CobQ family. CobQ subfamily.

It functions in the pathway cofactor biosynthesis; adenosylcobalamin biosynthesis. Its function is as follows. Catalyzes amidations at positions B, D, E, and G on adenosylcobyrinic A,C-diamide. NH(2) groups are provided by glutamine, and one molecule of ATP is hydrogenolyzed for each amidation. This chain is Cobyric acid synthase, found in Granulibacter bethesdensis (strain ATCC BAA-1260 / CGDNIH1).